Reading from the N-terminus, the 210-residue chain is MTQGSRLYFAVAVLMCGFVSINGVGLNDLLERASQLSDKLHSLSTSLTNDLDSHFPPVGRVMMPRPSMCHTSSLQIPNDKDQALKVPEDELLSLARSLLLAWSDPLALLSSEASSLAHPERNTIDSKTKELQDNINSLGAGLEHVFNKMDSTSDNLSSLPFDINSLGQDKTSRLVNFHFLLSCFRRDSHKIDSFLKVLRCRAAKKRPEMC.

A signal peptide spans 1-23; sequence MTQGSRLYFAVAVLMCGFVSING. 2 cysteine pairs are disulfide-bonded: Cys-69/Cys-183 and Cys-200/Cys-210.

Belongs to the somatotropin/prolactin family. Pituitary gland.

Its subcellular location is the secreted. The polypeptide is Prolactin (prl1) (Carassius auratus (Goldfish)).